Here is a 660-residue protein sequence, read N- to C-terminus: Bifunctional polymyxin resistance protein ArnA (660 aa).

Residues 1–304 (MKTVVFAYHD…MLGLVQGSRL (304 aa)) form a formyltransferase ArnAFT region. 86–88 (HLI) lines the (6R)-10-formyltetrahydrofolate pocket. The active-site Proton donor; for formyltransferase activity is His104. Residues Arg114 and 136–140 (VKRAD) contribute to the (6R)-10-formyltetrahydrofolate site. A dehydrogenase ArnADH region spans residues 314–660 (RRTRVLILGV…RTVDLTDKPS (347 aa)). Residues Asp347 and 368–369 (DI) each bind NAD(+). Residues Ala393, Tyr398, and 432 to 433 (TS) contribute to the UDP-alpha-D-glucuronate site. Residue Glu434 is the Proton acceptor; for decarboxylase activity of the active site. UDP-alpha-D-glucuronate is bound by residues Arg460, Asn492, 526–535 (KLIDGGKQKR), and Tyr613. Arg619 (proton donor; for decarboxylase activity) is an active-site residue.

In the N-terminal section; belongs to the Fmt family. UDP-L-Ara4N formyltransferase subfamily. It in the C-terminal section; belongs to the NAD(P)-dependent epimerase/dehydratase family. UDP-glucuronic acid decarboxylase subfamily. As to quaternary structure, homohexamer, formed by a dimer of trimers.

It carries out the reaction UDP-alpha-D-glucuronate + NAD(+) = UDP-beta-L-threo-pentopyranos-4-ulose + CO2 + NADH. It catalyses the reaction UDP-4-amino-4-deoxy-beta-L-arabinose + (6R)-10-formyltetrahydrofolate = UDP-4-deoxy-4-formamido-beta-L-arabinose + (6S)-5,6,7,8-tetrahydrofolate + H(+). The protein operates within nucleotide-sugar biosynthesis; UDP-4-deoxy-4-formamido-beta-L-arabinose biosynthesis; UDP-4-deoxy-4-formamido-beta-L-arabinose from UDP-alpha-D-glucuronate: step 1/3. Its pathway is nucleotide-sugar biosynthesis; UDP-4-deoxy-4-formamido-beta-L-arabinose biosynthesis; UDP-4-deoxy-4-formamido-beta-L-arabinose from UDP-alpha-D-glucuronate: step 3/3. It functions in the pathway bacterial outer membrane biogenesis; lipopolysaccharide biosynthesis. Functionally, bifunctional enzyme that catalyzes the oxidative decarboxylation of UDP-glucuronic acid (UDP-GlcUA) to UDP-4-keto-arabinose (UDP-Ara4O) and the addition of a formyl group to UDP-4-amino-4-deoxy-L-arabinose (UDP-L-Ara4N) to form UDP-L-4-formamido-arabinose (UDP-L-Ara4FN). The modified arabinose is attached to lipid A and is required for resistance to polymyxin and cationic antimicrobial peptides. This is Bifunctional polymyxin resistance protein ArnA from Shigella sonnei (strain Ss046).